The following is a 644-amino-acid chain: Large subunit GTPase 1 homolog (644 aa).

The segment at 1–31 (MGRRRAPGGGSLGRVLIRQQTQRSRSHRHTD) is disordered. Phosphoserine is present on residues S93 and S97. One can recognise a CP-type G domain in the interval 164–430 (WRQLWRVIER…LCDCPGLVMP (267 aa)). 212–215 (NKAD) serves as a coordination point for GTP. Residues 253-345 (KEEVDSVAGD…KNAENQQVNN (93 aa)) are disordered. Positions 302–326 (CQEDEEEDWQTCSEEDSVPEEEEGC) are enriched in acidic residues. GTP contacts are provided by residues 379-386 (GYPNVGKS) and 423-426 (DCPG). Residues 618 to 644 (VPGKPWKKHGNRNKKEKSRRLYKHLDV) form a disordered region. Positions 622–644 (PWKKHGNRNKKEKSRRLYKHLDV) are enriched in basic residues.

It belongs to the TRAFAC class YlqF/YawG GTPase family. LSG1 subfamily.

It localises to the cytoplasm. It is found in the endoplasmic reticulum. The protein resides in the nucleus. Its subcellular location is the cajal body. It catalyses the reaction GTP + H2O = GDP + phosphate + H(+). In terms of biological role, functions as a GTPase. May act by mediating the release of NMD3 from the 60S ribosomal subunit after export into the cytoplasm during the 60S ribosomal subunit maturation. This Mus musculus (Mouse) protein is Large subunit GTPase 1 homolog.